The primary structure comprises 332 residues: Fructose-1,6-bisphosphatase class 1 (332 aa).

Mg(2+) is bound by residues E89, D110, L112, and D113. Substrate is bound by residues 113-116 (DGSS), N206, Y239, 257-259 (YLY), and K269. Position 275 (E275) interacts with Mg(2+).

This sequence belongs to the FBPase class 1 family. Homotetramer. Requires Mg(2+) as cofactor.

It is found in the cytoplasm. It carries out the reaction beta-D-fructose 1,6-bisphosphate + H2O = beta-D-fructose 6-phosphate + phosphate. It functions in the pathway carbohydrate biosynthesis; gluconeogenesis. The sequence is that of Fructose-1,6-bisphosphatase class 1 from Salmonella gallinarum (strain 287/91 / NCTC 13346).